The following is a 221-amino-acid chain: Membrane-bound lytic murein transglycosylase E (221 aa).

This sequence belongs to the transglycosylase Slt family.

It carries out the reaction Exolytic cleavage of the (1-&gt;4)-beta-glycosidic linkage between N-acetylmuramic acid (MurNAc) and N-acetylglucosamine (GlcNAc) residues in peptidoglycan, from either the reducing or the non-reducing ends of the peptidoglycan chains, with concomitant formation of a 1,6-anhydrobond in the MurNAc residue.. Murein-degrading enzyme. May play a role in recycling of muropeptides during cell elongation and/or cell division. In Buchnera aphidicola subsp. Acyrthosiphon pisum (strain APS) (Acyrthosiphon pisum symbiotic bacterium), this protein is Membrane-bound lytic murein transglycosylase E (mltE).